Here is a 208-residue protein sequence, read N- to C-terminus: FMN-dependent NADH:quinone oxidoreductase 1 (208 aa).

17–19 is a binding site for FMN; that stretch reads SVS.

Belongs to the azoreductase type 1 family. Homodimer. It depends on FMN as a cofactor.

It catalyses the reaction 2 a quinone + NADH + H(+) = 2 a 1,4-benzosemiquinone + NAD(+). The catalysed reaction is N,N-dimethyl-1,4-phenylenediamine + anthranilate + 2 NAD(+) = 2-(4-dimethylaminophenyl)diazenylbenzoate + 2 NADH + 2 H(+). Its function is as follows. Quinone reductase that provides resistance to thiol-specific stress caused by electrophilic quinones. In terms of biological role, also exhibits azoreductase activity. Catalyzes the reductive cleavage of the azo bond in aromatic azo compounds to the corresponding amines. This chain is FMN-dependent NADH:quinone oxidoreductase 1, found in Listeria monocytogenes serovar 1/2a (strain ATCC BAA-679 / EGD-e).